An 859-amino-acid chain; its full sequence is Envelope glycoprotein (859 aa).

A propeptide spanning residues 1–6 (MVSIAF) is cleaved from the precursor. At 7–614 (YGGIPGGIST…KDLWSHIGNW (608 aa)) the chain is on the extracellular side. Asn40, Asn112, Asn141, Asn148, Asn186, Asn214, Asn233, Asn244, Asn340, Asn368, Asn399, Asn406, Asn411, and Asn422 each carry an N-linked (GlcNAc...) asparagine; by host glycan. The fusion peptide stretch occupies residues 446–466 (FGISAIVAAIVAATAIARSAT). N-linked (GlcNAc...) asparagine; by host glycans are attached at residues Asn483 and Asn490. Positions 498–513 (LIERQIKILYAMILQT) are immunosuppression. N-linked (GlcNAc...) asparagine; by host glycosylation is found at Asn550 and Asn557. Coiled-coil stretches lie at residues 576 to 624 (ILTT…SIIK) and 663 to 699 (KKFHHKHASREDTWDQAQHNIHLAGVTGGSGDKYYKQ). The chain crosses the membrane as a helical span at residues 615 to 635 (IPGLGASIIKYIVMFLLIYLL). The Cytoplasmic portion of the chain corresponds to 636–859 (LTSSPKILRA…TSHVSMPQYV (224 aa)).

As to quaternary structure, the mature envelope protein (Env) consists of a trimer of SU-TM heterodimers attached by noncovalent interactions or by a labile interchain disulfide bond. Specific enzymatic cleavages in vivo yield mature proteins. Envelope glycoproteins are synthesized as an inactive precursor that is N-glycosylated and processed likely by host cell furin or by a furin-like protease in the Golgi to yield the mature SU and TM proteins. The cleavage site between SU and TM requires the minimal sequence [KR]-X-[KR]-R.

It is found in the virion membrane. Its subcellular location is the host cell membrane. In terms of biological role, the surface protein (SU) attaches the virus to the host cell by binding to its receptor. This interaction triggers the refolding of the transmembrane protein (TM) and is thought to activate its fusogenic potential by unmasking its fusion peptide. Fusion occurs at the host cell plasma membrane. The transmembrane protein (TM) acts as a class I viral fusion protein. Under the current model, the protein has at least 3 conformational states: pre-fusion native state, pre-hairpin intermediate state, and post-fusion hairpin state. During viral and target cell membrane fusion, the coiled coil regions (heptad repeats) assume a trimer-of-hairpins structure, positioning the fusion peptide in close proximity to the C-terminal region of the ectodomain. The formation of this structure appears to drive apposition and subsequent fusion of viral and target cell membranes. Membranes fusion leads to delivery of the nucleocapsid into the cytoplasm. The chain is Envelope glycoprotein (env) from Equus asinus (Donkey).